The chain runs to 661 residues: UvrABC system protein B (661 aa).

In terms of domain architecture, Helicase ATP-binding spans 26–181; the sequence is KGIQEGRKHQ…LLRKLVDIQY (156 aa). 39-46 provides a ligand contact to ATP; the sequence is GATGTGKT. A Beta-hairpin motif is present at residues 92-115; that stretch reads YYDYYQPEAYVPQTDTFIEKDASI. The 167-residue stretch at 430 to 596 folds into the Helicase C-terminal domain; that stretch reads QIDDLIGEIQ…TINKEIRDVI (167 aa). The 36-residue stretch at 625 to 660 folds into the UVR domain; the sequence is QKVVEQMEHEMKEAARALDFERAAELRDLLLELKAE.

It belongs to the UvrB family. As to quaternary structure, forms a heterotetramer with UvrA during the search for lesions. Interacts with UvrC in an incision complex.

The protein resides in the cytoplasm. In terms of biological role, the UvrABC repair system catalyzes the recognition and processing of DNA lesions. A damage recognition complex composed of 2 UvrA and 2 UvrB subunits scans DNA for abnormalities. Upon binding of the UvrA(2)B(2) complex to a putative damaged site, the DNA wraps around one UvrB monomer. DNA wrap is dependent on ATP binding by UvrB and probably causes local melting of the DNA helix, facilitating insertion of UvrB beta-hairpin between the DNA strands. Then UvrB probes one DNA strand for the presence of a lesion. If a lesion is found the UvrA subunits dissociate and the UvrB-DNA preincision complex is formed. This complex is subsequently bound by UvrC and the second UvrB is released. If no lesion is found, the DNA wraps around the other UvrB subunit that will check the other stand for damage. This is UvrABC system protein B from Bacillus velezensis (strain DSM 23117 / BGSC 10A6 / LMG 26770 / FZB42) (Bacillus amyloliquefaciens subsp. plantarum).